The sequence spans 1018 residues: Putative type I restriction enzyme MjaVIIIP endonuclease subunit (1018 aa).

This sequence belongs to the HsdR family. The type I restriction/modification system is composed of three polypeptides R, M and S.

The catalysed reaction is Endonucleolytic cleavage of DNA to give random double-stranded fragments with terminal 5'-phosphates, ATP is simultaneously hydrolyzed.. Its function is as follows. The restriction (R) subunit of a type I restriction enzyme that recognizes 5'-GAYN(5)GTAA-3' and cleaves a random distance away. The R subunit is required for both endonuclease and ATPase activities but not for modification. After locating a non-methylated recognition site, the enzyme complex serves as a molecular motor that translocates DNA in an ATP-dependent manner until a collision occurs that triggers cleavage. The protein is Putative type I restriction enzyme MjaVIIIP endonuclease subunit of Methanocaldococcus jannaschii (strain ATCC 43067 / DSM 2661 / JAL-1 / JCM 10045 / NBRC 100440) (Methanococcus jannaschii).